A 181-amino-acid chain; its full sequence is Probable calcium-binding protein CML16 (181 aa).

The disordered stretch occupies residues 1 to 24 (MSNTTEKKMPQQQQVERPTALAPA). EF-hand domains follow at residues 23–58 (PADA…IAPP), 63–98 (AGGR…GRGD), 100–135 (EHEA…IGEG), and 136–171 (CSAE…DAAA). Residues Asp-36, Asp-38, Asp-40, Arg-42, Glu-47, Asp-76, Asp-78, Asp-80, Glu-87, Asp-113, Asp-115, Asp-117, Arg-119, Glu-124, Asp-149, Asp-151, Asp-153, Cys-155, and Glu-160 each coordinate Ca(2+).

In terms of biological role, potential calcium sensor. The sequence is that of Probable calcium-binding protein CML16 (CML16) from Oryza sativa subsp. japonica (Rice).